We begin with the raw amino-acid sequence, 807 residues long: Dual specificity protein phosphatase PPS1 (807 aa).

A Tyrosine-protein phosphatase domain is found at 585–783 (LPSRILRHLY…LFKWWKKHYN (199 aa)). Positions 593-807 (LYLGSLDHAQ…GIAEVNMKYT (215 aa)) are catalytic. The active-site Phosphocysteine intermediate is C725.

It belongs to the protein-tyrosine phosphatase family. Non-receptor class dual specificity subfamily.

It catalyses the reaction O-phospho-L-tyrosyl-[protein] + H2O = L-tyrosyl-[protein] + phosphate. The catalysed reaction is O-phospho-L-seryl-[protein] + H2O = L-seryl-[protein] + phosphate. The enzyme catalyses O-phospho-L-threonyl-[protein] + H2O = L-threonyl-[protein] + phosphate. Functionally, protein phosphatase with specificity for serine, threonine, and tyrosine residues; has a role in the DNA synthesis phase of the cell cycle. The chain is Dual specificity protein phosphatase PPS1 (PPS1) from Saccharomyces cerevisiae (strain ATCC 204508 / S288c) (Baker's yeast).